The chain runs to 355 residues: 45 kDa calcium-binding protein (355 aa).

Positions 1 to 29 (MASRQGPLCGLAPCCLWLLGVILLMNASA) are cleaved as a signal peptide. The N-linked (GlcNAc...) asparagine glycan is linked to asparagine 26. 2 EF-hand domains span residues 91–126 (KSRR…KTAE) and 130–165 (EAVA…TKGH). Phosphoserine is present on serine 92. Ca(2+) is bound by residues aspartate 104, asparagine 106, aspartate 108, arginine 110, glutamate 115, aspartate 143, aspartate 145, aspartate 147, histidine 149, and glutamate 154. 2 positions are modified to phosphothreonine: threonine 186 and threonine 210. EF-hand domains lie at 226–261 (MLQF…TVEN), 271–306 (WVRD…MNEF), and 307–342 (SALN…FTGS). Positions 239, 241, 243, 245, and 250 each coordinate Ca(2+). A Phosphothreonine modification is found at threonine 258. Ca(2+)-binding residues include aspartate 284, asparagine 286, and aspartate 288. A Phosphothreonine modification is found at threonine 292. Ca(2+)-binding residues include glutamate 295, aspartate 320, asparagine 322, asparagine 324, tyrosine 326, and glutamate 331. Residues 302–355 (PMNEFSALNEAKQMIAIADENQNHYLEPEEVLKYSEFFTGSKLVDYARSVHEEF) form a necessary for intracellular retention in Golgi apparatus lumen region.

Belongs to the CREC family.

The protein localises to the golgi apparatus lumen. Functionally, may regulate calcium-dependent activities in the endoplasmic reticulum lumen or post-ER compartment. The chain is 45 kDa calcium-binding protein (SDF4) from Capra hircus (Goat).